Here is a 158-residue protein sequence, read N- to C-terminus: UPF0735 ACT domain-containing protein Bsph_3944 (158 aa).

An ACT domain is found at 80-155 (TVFLQLQDRK…FVESAEVISS (76 aa)).

The protein belongs to the UPF0735 family.

This chain is UPF0735 ACT domain-containing protein Bsph_3944, found in Lysinibacillus sphaericus (strain C3-41).